Here is a 534-residue protein sequence, read N- to C-terminus: Chaperonin GroEL (534 aa).

ATP is bound by residues 29–32 (TAGP), 86–90 (DGTTT), G413, and D494.

The protein belongs to the chaperonin (HSP60) family. In terms of assembly, forms a cylinder of 14 subunits composed of two heptameric rings stacked back-to-back. Interacts with the co-chaperonin GroES.

It is found in the cytoplasm. It carries out the reaction ATP + H2O + a folded polypeptide = ADP + phosphate + an unfolded polypeptide.. In terms of biological role, together with its co-chaperonin GroES, plays an essential role in assisting protein folding. The GroEL-GroES system forms a nano-cage that allows encapsulation of the non-native substrate proteins and provides a physical environment optimized to promote and accelerate protein folding. This chain is Chaperonin GroEL, found in Mycoplasmoides gallisepticum (strain R(low / passage 15 / clone 2)) (Mycoplasma gallisepticum).